The chain runs to 152 residues: Transcriptional regulator MraZ (152 aa).

2 SpoVT-AbrB domains span residues A5 to E52 and A81 to T124.

The protein belongs to the MraZ family. Forms oligomers.

It localises to the cytoplasm. The protein localises to the nucleoid. Functionally, negatively regulates its own expression and that of the subsequent genes in the proximal part of the division and cell wall (dcw) gene cluster. Acts by binding directly to DNA. May also regulate the expression of genes outside the dcw cluster. The polypeptide is Transcriptional regulator MraZ (Klebsiella pneumoniae subsp. pneumoniae (strain ATCC 700721 / MGH 78578)).